The primary structure comprises 578 residues: Proline--tRNA ligase (578 aa).

Belongs to the class-II aminoacyl-tRNA synthetase family. ProS type 1 subfamily. As to quaternary structure, homodimer.

It is found in the cytoplasm. It catalyses the reaction tRNA(Pro) + L-proline + ATP = L-prolyl-tRNA(Pro) + AMP + diphosphate. Its function is as follows. Catalyzes the attachment of proline to tRNA(Pro) in a two-step reaction: proline is first activated by ATP to form Pro-AMP and then transferred to the acceptor end of tRNA(Pro). As ProRS can inadvertently accommodate and process non-cognate amino acids such as alanine and cysteine, to avoid such errors it has two additional distinct editing activities against alanine. One activity is designated as 'pretransfer' editing and involves the tRNA(Pro)-independent hydrolysis of activated Ala-AMP. The other activity is designated 'posttransfer' editing and involves deacylation of mischarged Ala-tRNA(Pro). The misacylated Cys-tRNA(Pro) is not edited by ProRS. The sequence is that of Proline--tRNA ligase from Burkholderia orbicola (strain AU 1054).